Reading from the N-terminus, the 394-residue chain is Maltose permease (394 aa).

Topologically, residues 1 to 11 are cytoplasmic; it reads MGAAFKWGAAA. The helical transmembrane segment at 12-38 threads the bilayer; it reads RKTVFPLFYFLIFFAFGALFPLLSVYL. The Extracellular segment spans residues 39-45; that stretch reads QEEARLS. Residues 46-74 traverse the membrane as a helical segment; sequence GAAIGWIMSLPPIVTMAAQPLWGTAADYT. Topologically, residues 75 to 78 are cytoplasmic; it reads RKPV. Residues 79–104 traverse the membrane as a helical segment; that stretch reads GLLLAALVLAALFGVMYALAGSYRLF. Over 105 to 108 the chain is Extracellular; it reads VVLT. The chain crosses the membrane as a helical span at residues 109–126; sequence VLLSAMQSAIVPLSDSLA. The Cytoplasmic segment spans residues 127-137; that stretch reads LRHVHEQGGNY. A helical membrane pass occupies residues 138-160; that stretch reads GAIRLWGSLGFAMAVLAVGWLSD. The Extracellular portion of the chain corresponds to 161 to 163; that stretch reads HIA. A helical transmembrane segment spans residues 164–183; that stretch reads FAVIFYAFSLALLTAAALAT. Over 184–213 the chain is Cytoplasmic; the sequence is RLPRYPMGAPGALTRQDVRGLLASRPFRLL. Residues 214-233 form a helical membrane-spanning segment; the sequence is LVATFLLFGPILANNSYFGL. The Extracellular segment spans residues 234–237; it reads LIHE. Residues 238–262 traverse the membrane as a helical segment; it reads LGGTLTGIGLAFLFAAGSEAPFMKA. The Cytoplasmic segment spans residues 263-272; that stretch reads ADRLIGRFGM. Residues 273–292 traverse the membrane as a helical segment; sequence VRLLLLAALISAARWLAYAA. Residues 293 to 295 lie on the Extracellular side of the membrane; that stretch reads DPP. A helical membrane pass occupies residues 296–318; that stretch reads LWFVYMTTVVQGCSVGLAIPTAL. Residues 319 to 330 lie on the Cytoplasmic side of the membrane; it reads QYARRLAPERVQ. The helical transmembrane segment at 331–358 threads the bilayer; sequence STAVALYSAVGNGLGAWFCTLVGGYLLE. Residues 359–361 lie on the Extracellular side of the membrane; it reads RWQ. The helical transmembrane segment at 362 to 382 threads the bilayer; that stretch reads IGAVYLFFSICTIVGVLVLLL. Topologically, residues 383-394 are cytoplasmic; that stretch reads LAKRERTAGEEK.

Belongs to the major facilitator superfamily.

Its subcellular location is the cell membrane. In terms of biological role, high affinity transport of maltose. The chain is Maltose permease (malA) from Geobacillus stearothermophilus (Bacillus stearothermophilus).